Consider the following 678-residue polypeptide: Pescadillo homolog (678 aa).

The segment at 265–289 (PQQQTKTNNTTKKSKSTTAAAAATT) is disordered. A compositionally biased stretch (low complexity) spans 269-289 (TKTNNTTKKSKSTTAAAAATT). Positions 352–442 (DVTTLFKGFH…LLLPYSEYTI (91 aa)) constitute a BRCT domain. Disordered stretches follow at residues 485-601 (TNAE…EDTK) and 626-678 (ATAN…KQKK). The span at 505–518 (SDGESDDEDDEDLE) shows a compositional bias: acidic residues. A compositionally biased stretch (basic and acidic residues) spans 519-531 (HLETRYTEELRKE). Over residues 541–574 (VDDDDEEEEDGEEDGEEEEEEEDGEEESESESES) the composition is skewed to acidic residues. The stretch at 581 to 640 (VLTKKQRDELNKQKQAEEDTKLAELMIRKKDKWIYNKVKETNQQRATANQTLLEKRNKVE) forms a coiled coil. Composition is skewed to basic and acidic residues over residues 585-601 (KQRDELNKQKQAEEDTK) and 633-643 (LEKRNKVESGK). The segment covering 649–678 (VKVAPQPKKPAPLVKKSQQKQQQASKKQKK) has biased composition (low complexity).

Belongs to the pescadillo family.

The protein localises to the nucleus. The protein resides in the nucleolus. Its subcellular location is the nucleoplasm. Required for maturation of ribosomal RNAs and formation of the large ribosomal subunit. In Dictyostelium discoideum (Social amoeba), this protein is Pescadillo homolog.